Here is a 1117-residue protein sequence, read N- to C-terminus: PR domain zinc finger protein 10 (1117 aa).

Residues 97–142 (QQTPLGGLEAKEEEDEDEDEDTEEDEEEDGEDADLDDWEPDPPRPF) are disordered. Residues 107–136 (KEEEDEDEDEDTEEDEEEDGEDADLDDWEP) show a composition bias toward acidic residues. Residues 182 to 300 (LPLVLYIDRF…PKQELKVWYA (119 aa)) form the SET domain. An N-terminal PR domain; essential for transcriptional activator activity region spans residues 201–305 (IPKRTQLGPV…KVWYAASYAE (105 aa)). The C2H2-type 1 zinc finger occupies 329-351 (WPCYECNRRFISSEQLQQHLNSH). Residue lysine 354 forms a Glycyl lysine isopeptide (Lys-Gly) (interchain with G-Cter in SUMO2) linkage. Positions 361–381 (TRGRGRGRGKRRFGPGRRPGR) are enriched in basic residues. The interval 361-386 (TRGRGRGRGKRRFGPGRRPGRPPKFI) is disordered. Serine 398 carries the phosphoserine modification. At threonine 402 the chain carries Phosphothreonine. Residues 440-474 (QETQSSLEHEPETHTLHLQPQHEESVVPTQSTLTA) are disordered. The segment covering 446 to 464 (LEHEPETHTLHLQPQHEES) has biased composition (basic and acidic residues). 9 C2H2-type zinc fingers span residues 500-522 (FKCL…LRFH), 530-552 (LTCD…MKLH), 558-580 (YSCI…VAIH), 586-609 (FTCP…RSFH), 614-636 (YQCT…MLRH), 642-665 (FLCS…QRMH), 697-720 (FKCR…SKRH), 742-765 (YFCQ…LKNH), and 804-827 (VCCP…RKKH). The tract at residues 871-1097 (QAMTELSQTL…QTTSQQQTTQ (227 aa)) is C-terminal glutamine-rich region; essential for transcriptional activator activity. 3 disordered regions span residues 919 to 943 (VAPA…DPQP), 958 to 1001 (GQPL…SSVQ), and 1066 to 1094 (QTSA…SQQQ). A compositionally biased stretch (polar residues) spans 924 to 934 (SPHQSQQSTVD).

It belongs to the class V-like SAM-binding methyltransferase superfamily.

The protein resides in the nucleus. Transcriptional activator, essential for early embryonic development and survival of embryonic stem cells (ESCs). Supports cell growth and survival during early development by transcriptionally activating the expression of the translation initiation factor EIF3B, to sustain global translation. Activates the transcription of FLNC. In Pongo abelii (Sumatran orangutan), this protein is PR domain zinc finger protein 10 (PRDM10).